The following is a 159-amino-acid chain: Putative transmembrane protein ORF159 (159 aa).

Transmembrane regions (helical) follow at residues 20–40 (LLLS…LSLF) and 59–79 (IIAV…GFCC). The short motif at 106-108 (RGD) is the Cell attachment site element.

It is found in the host membrane. This is Putative transmembrane protein ORF159 from Acidianus sp. F28 (AFV-2).